We begin with the raw amino-acid sequence, 163 residues long: Iron-sulfur cluster assembly protein 2 (163 aa).

A mitochondrion-targeting transit peptide spans 1-48 (MMMLRQTSRKAYLGLQASPLGLGRRLYHENVIDHFENPRNVGSFNRND).

This sequence belongs to the NifU family. As to quaternary structure, component of the core Fe-S cluster (ISC) assembly machinery. [2Fe-2S] cluster is required as a cofactor. Mostly expressed in leaves, pollen and flowers.

Its subcellular location is the mitochondrion matrix. Its pathway is cofactor biosynthesis; iron-sulfur cluster biosynthesis. Its function is as follows. Scaffold protein for the de novo synthesis of iron-sulfur (Fe-S) clusters within mitochondria, which is required for maturation of both mitochondrial and cytoplasmic [2Fe-2S] and [4Fe-4S] proteins. First, a [2Fe-2S] cluster is transiently assembled on the scaffold protein ISCU (ISU1, ISU2 or ISU3). In a second step, the cluster is released from ISCU, transferred to a glutaredoxin, followed by the formation of mitochondrial [2Fe-2S] proteins, the synthesis of [4Fe-4S] clusters and their target-specific insertion into the recipient apoproteins. Cluster assembly on ISCU depends on the function of the cysteine desulfurase complex NFS1-ISD11, which serves as the sulfur donor for cluster synthesis, the iron-binding protein frataxin as the putative iron donor, and the electron transfer chain comprised of ferredoxin reductase and ferredoxin, which receive their electrons from NADH. The protein is Iron-sulfur cluster assembly protein 2 (ISU2) of Arabidopsis thaliana (Mouse-ear cress).